The following is a 425-amino-acid chain: Keratin, type II cytoskeletal I (425 aa).

The segment at 1-16 (FLEQQNKVLETKWKLL) is coil 1A. In terms of domain architecture, IF rod spans 1–296 (FLEQQNKVLE…YMLEGEEGRI (296 aa)). The interval 17–37 (QEQGTKGTTKRANLDPLFEKY) is linker 1. The coil 1B stretch occupies residues 38 to 129 (IADLKKYLDN…TRDAAELSQV (92 aa)). The linker 12 stretch occupies residues 130 to 153 (HDQVTDTSVVLTMDNNRDLNLDSI). The interval 154–292 (IKEVKCQYEQ…STYRYMLEGE (139 aa)) is coil 2. Residues 293–425 (EGRISGQIVN…STTSTTKKTY (133 aa)) are tail.

The protein belongs to the intermediate filament family. Heterotetramer of two type I and two type II keratins.

The sequence is that of Keratin, type II cytoskeletal I from Xenopus laevis (African clawed frog).